The chain runs to 71 residues: SPI-2 type 3 secretion system needle filament protein (71 aa).

It belongs to the SctF family. The core secretion machinery of the T3SS is composed of approximately 20 different proteins, including cytoplasmic components, a base, an export apparatus and a needle. This subunit polymerizes and forms the helical needle filament.

Its subcellular location is the secreted. The protein localises to the cell surface. Functionally, component of the type III secretion system (T3SS), also called injectisome, which is used to inject bacterial effector proteins into eukaryotic host cells. SsaG/SctF2 forms the external needle filament that protrudes from the bacterial surface. During infection, can induce innate immune responses. The needle proteins interact with host TLR2 or TLR4, and induce signaling by NF-kappa-B and/or AP-1. This activation is MyD88 dependent and results in increased expression of cytokines, including TNF-alpha, IL-6 and IL-8. The sequence is that of SPI-2 type 3 secretion system needle filament protein from Salmonella typhimurium (strain LT2 / SGSC1412 / ATCC 700720).